Reading from the N-terminus, the 278-residue chain is Trehalose monomycolate transport factor A (278 aa).

A topological domain (periplasmic) is located at residue methionine 1. The chain crosses the membrane as a helical span at residues 2-22 (VPLWFTLSALCFVGAAVLLYV). The Cytoplasmic segment spans residues 23–278 (DIDRRRGLGR…NGREASHFQR (256 aa)). The interval 200–278 (PPVPQNGSQA…NGREASHFQR (79 aa)) is disordered. A compositionally biased stretch (basic and acidic residues) spans 269–278 (NGREASHFQR).

Monomer. Interacts (via N-terminus) with MmpL3; active trehalose monomycolate (TMM) biosynthesis is not required for the complex formation. Interacts with MSMEG_5308.

It is found in the cell inner membrane. The protein localises to the cell septum. Its subcellular location is the cell tip. Functionally, required for MmpL3-dependent trehalose monomycolate (TMM) transport to the cell wall. Required for growth and cell elongation. In Mycolicibacterium smegmatis (strain ATCC 700084 / mc(2)155) (Mycobacterium smegmatis), this protein is Trehalose monomycolate transport factor A.